The chain runs to 208 residues: Ectodysplasin-A receptor-associated adapter protein (208 aa).

Residues 1–18 (MASPDDPLRSDHMAKEPV) are compositionally biased toward basic and acidic residues. A disordered region spans residues 1-99 (MASPDDPLRS…KGSCSCPSCS (99 aa)). The span at 49-61 (TVNSNCPPNSDDQ) shows a compositional bias: polar residues. In terms of domain architecture, Death spans 116–195 (DTIRIKLDPC…KILRRWVDEE (80 aa)).

Binds EDAR. Self-associates and binds TRAF1, TRAF2 and TRAF3.

The protein localises to the cytoplasm. Functionally, adapter protein that interacts with EDAR DEATH domain and couples the receptor to EDA signaling pathway during morphogenesis of ectodermal organs. Mediates the activation of NF-kappa-B. This is Ectodysplasin-A receptor-associated adapter protein (Edaradd) from Mus musculus (Mouse).